The following is a 357-amino-acid chain: CRISPR system Cms protein Csm5 (357 aa).

This sequence belongs to the CRISPR-associated Csm5 family. In terms of assembly, part of the Csm effector complex that includes at least Cas10(1), Csm2(3), Csm3(5), Csm4(1), Csm5(1) and mature crRNA. The Csm complex is elongated and slightly twisted with a maximal length of 215 Angstroms and a diameter of 75-80 Angstroms. It has been modeled to have a central protein filamant of Csm3 subunits along which the dsRNA helix of paired crRNA and target RNA binds. The filament is capped at one end by Cas10 and Csm4 and at the other end by Csm5; ssDNA is thought to bind to the N-terminal HD domain of Cas10. Csm with a precursor crRNA does not include Csm5, while Cas6, the enzyme probably involved in pre-crRNA processing, is found associated with a subset of the Csm complex.

Its function is as follows. CRISPR (clustered regularly interspaced short palindromic repeat) is an adaptive immune system that provides protection against mobile genetic elements (viruses, transposable elements and conjugative plasmids). CRISPR clusters contain spacers, sequences complementary to antecedent mobile elements, and target invading nucleic acids. CRISPR clusters are transcribed and processed into CRISPR RNA (crRNA). The type III-A Csm effector complex binds crRNA and acts as a crRNA-guided RNase, DNase and cyclic oligoadenylate synthase; binding of target RNA cognate to the crRNA is required for all activities. In a heterologous host this Csm effector complex restricts ssRNA phage MS2, suggesting it may target RNA viruses in vivo. Functionally, csm functions as a non-specific ssDNase. Base-pairing between crRNA and target RNA to form a ternary Csm complex activates a ssDNase activity; target RNA cleavage suppresses the ssDNase, a temporal control that prevents uncontrolled DNA degradation. Viral RNA transcripts probably tether the Csm complex to the viral genome, recruiting Cas10 ssDNA activity which is able to degrade DNA in the transcription bubble, spatially controlling the DNase activity. In terms of biological role, this subunit might be involved in maturation of a crRNA intermediate to its mature form. The sequence is that of CRISPR system Cms protein Csm5 from Streptococcus thermophilus.